A 437-amino-acid chain; its full sequence is Elongation factor Tu, mitochondrial (437 aa).

The N-terminal 38 residues, 1-38 (MSALLPRLLTRTAFKASGKLLRLSSVISRTFSQTTTSY), are a transit peptide targeting the mitochondrion. A tr-type G domain is found at 46–242 (KPHVNIGTIG…AVDEYIPTPE (197 aa)). The G1 stretch occupies residues 55-62 (GHVDHGKT). A GTP-binding site is contributed by 55–62 (GHVDHGKT). The interval 96 to 100 (GITIS) is G2. The interval 117–120 (DCPG) is G3. Residues 117 to 121 (DCPGH) and 172 to 175 (NKVD) each bind GTP. Residues 172–175 (NKVD) are G4. Residues 210-212 (SAL) form a G5 region.

The protein belongs to the TRAFAC class translation factor GTPase superfamily. Classic translation factor GTPase family. EF-Tu/EF-1A subfamily. The precursor is processed in two steps involving mitochondrial intermediate peptidase (MIP) and mitochondrial processing peptidase (MPP).

The protein localises to the mitochondrion. It functions in the pathway protein biosynthesis; polypeptide chain elongation. Functionally, G-protein that, in its active GTP-bound form, binds to and delivers aminoacyl-tRNA to the A-site of ribosomes during protein biosynthesis. In the presence of a correct codon-anticodon match between the aminoacyl-tRNA and the A-site codon of the ribosome-bound mRNA, the ribosome acts as a GTPase activator and the GTP is hydrolyzed. The inactive GDP-bound form leaves the ribosome and must be recycled before binding another molecule of aminoacyl-tRNA. Required for mitochondrial protein biosynthesis and maintenance of mitochondrial DNA. This is Elongation factor Tu, mitochondrial (TUF1) from Saccharomyces cerevisiae (strain ATCC 204508 / S288c) (Baker's yeast).